The chain runs to 328 residues: Trans-O-hydroxybenzylidenepyruvate hydratase-aldolase (328 aa).

The protein belongs to the DapA family. Homotrimer.

The catalysed reaction is (3E)-4-(2-hydroxyphenyl)-2-oxobut-3-enoate + H2O = salicylaldehyde + pyruvate. It functions in the pathway aromatic compound metabolism; naphthalene degradation. With respect to regulation, inhibited bye p-chloromercuribenzoate and salicylaldehyde. Activated by salicylate. Functionally, involved in the naphthalene and naphthalenesulfonate catabolic pathway. Catalyzes the transformation of trans-O-hydroxybenzylidenepyruvate (THBPA) to salicylaldehyde and pyruvate. The reaction is reversible. Can also use 2,4-dihydroxybenzalpyruvate (2,4-DHBP) and 2,6-dihydroxybenzalpyruvate (2,6-DHBP). This is Trans-O-hydroxybenzylidenepyruvate hydratase-aldolase (nsaE) from Sphingobium xenophagum.